A 472-amino-acid chain; its full sequence is Glutamate--tRNA ligase (472 aa).

Residues 18–28 (PSPTGYLHIGG) carry the 'HIGH' region motif. Positions 122–138 (RARGEKPRYDGRWRPEP) are enriched in basic and acidic residues. Residues 122 to 150 (RARGEKPRYDGRWRPEPGKTLPVPPSGVQ) form a disordered region. A 'KMSKS' region motif is present at residues 250 to 254 (KLSKR). Lysine 253 lines the ATP pocket.

The protein belongs to the class-I aminoacyl-tRNA synthetase family. Glutamate--tRNA ligase type 1 subfamily. In terms of assembly, monomer.

It localises to the cytoplasm. It catalyses the reaction tRNA(Glu) + L-glutamate + ATP = L-glutamyl-tRNA(Glu) + AMP + diphosphate. Catalyzes the attachment of glutamate to tRNA(Glu) in a two-step reaction: glutamate is first activated by ATP to form Glu-AMP and then transferred to the acceptor end of tRNA(Glu). The sequence is that of Glutamate--tRNA ligase from Thiobacillus denitrificans (strain ATCC 25259 / T1).